A 314-amino-acid chain; its full sequence is Homoserine O-acetyltransferase (314 aa).

The Acyl-thioester intermediate role is filled by C142. 2 residues coordinate substrate: K163 and S192. H235 serves as the catalytic Proton acceptor. The active site involves E237. A substrate-binding site is contributed by R249.

It belongs to the MetA family.

The protein localises to the cytoplasm. It catalyses the reaction L-homoserine + acetyl-CoA = O-acetyl-L-homoserine + CoA. The protein operates within amino-acid biosynthesis; L-methionine biosynthesis via de novo pathway; O-acetyl-L-homoserine from L-homoserine: step 1/1. Its function is as follows. Transfers an acetyl group from acetyl-CoA to L-homoserine, forming acetyl-L-homoserine. The protein is Homoserine O-acetyltransferase of Streptococcus pneumoniae serotype 19F (strain G54).